Reading from the N-terminus, the 96-residue chain is MRHYEVMVILDPDLEERAVSPLIENFLSVVREGDGKVEKVDTWGRRRLAYEIKKKPEGIYSVIDLQAEPAVVKELDRQMNLNESVLRTKVLRPEVH.

Belongs to the bacterial ribosomal protein bS6 family.

Binds together with bS18 to 16S ribosomal RNA. This chain is Small ribosomal subunit protein bS6, found in Streptomyces griseus subsp. griseus (strain JCM 4626 / CBS 651.72 / NBRC 13350 / KCC S-0626 / ISP 5235).